The chain runs to 385 residues: Succinate--CoA ligase [ADP-forming] subunit beta (385 aa).

The 229-residue stretch at lysine 9–glutamate 237 folds into the ATP-grasp domain. ATP contacts are provided by residues lysine 45, glycine 52–glycine 54, valine 94, and glutamate 101. Asparagine 192 and aspartate 206 together coordinate Mg(2+). Substrate-binding positions include asparagine 257 and glycine 314 to threonine 316.

The protein belongs to the succinate/malate CoA ligase beta subunit family. Heterotetramer of two alpha and two beta subunits. It depends on Mg(2+) as a cofactor.

The enzyme catalyses succinate + ATP + CoA = succinyl-CoA + ADP + phosphate. The catalysed reaction is GTP + succinate + CoA = succinyl-CoA + GDP + phosphate. It participates in carbohydrate metabolism; tricarboxylic acid cycle; succinate from succinyl-CoA (ligase route): step 1/1. Functionally, succinyl-CoA synthetase functions in the citric acid cycle (TCA), coupling the hydrolysis of succinyl-CoA to the synthesis of either ATP or GTP and thus represents the only step of substrate-level phosphorylation in the TCA. The beta subunit provides nucleotide specificity of the enzyme and binds the substrate succinate, while the binding sites for coenzyme A and phosphate are found in the alpha subunit. This is Succinate--CoA ligase [ADP-forming] subunit beta from Deinococcus deserti (strain DSM 17065 / CIP 109153 / LMG 22923 / VCD115).